The chain runs to 146 residues: Hemoglobin subunit beta (146 aa).

Residues glutamate 2–histidine 146 enclose the Globin domain. Positions 63 and 92 each coordinate heme b.

It belongs to the globin family. As to quaternary structure, heterotetramer of two alpha chains and two beta chains. Red blood cells.

Its function is as follows. Involved in oxygen transport from gills to the various peripheral tissues. This Thunnus thynnus (Atlantic bluefin tuna) protein is Hemoglobin subunit beta (hbb).